Reading from the N-terminus, the 271-residue chain is Acyl-[acyl-carrier-protein]--UDP-N-acetylglucosamine O-acyltransferase (271 aa).

It belongs to the transferase hexapeptide repeat family. LpxA subfamily. Homotrimer.

It is found in the cytoplasm. It carries out the reaction a (3R)-hydroxyacyl-[ACP] + UDP-N-acetyl-alpha-D-glucosamine = a UDP-3-O-[(3R)-3-hydroxyacyl]-N-acetyl-alpha-D-glucosamine + holo-[ACP]. Its pathway is glycolipid biosynthesis; lipid IV(A) biosynthesis; lipid IV(A) from (3R)-3-hydroxytetradecanoyl-[acyl-carrier-protein] and UDP-N-acetyl-alpha-D-glucosamine: step 1/6. Its function is as follows. Involved in the biosynthesis of lipid A, a phosphorylated glycolipid that anchors the lipopolysaccharide to the outer membrane of the cell. This Azorhizobium caulinodans (strain ATCC 43989 / DSM 5975 / JCM 20966 / LMG 6465 / NBRC 14845 / NCIMB 13405 / ORS 571) protein is Acyl-[acyl-carrier-protein]--UDP-N-acetylglucosamine O-acyltransferase.